The following is an 821-amino-acid chain: Palmitoyltransferase AKR1 (821 aa).

Positions 1–118 (MVDKDANNEL…KDTASRKSMD (118 aa)) are disordered. The Cytoplasmic segment spans residues 1-400 (MVDKDANNEL…TIYLNPKIGK (400 aa)). Basic and acidic residues predominate over residues 93 to 117 (IQDESVNDKTSEPDENKDTASRKSM). ANK repeat units lie at residues 142-172 (PSLH…KAND), 176-205 (DGIT…SKAD), 213-243 (LKAS…DPTL), 247-277 (QSYN…STST), 289-318 (CDRT…DVSK), and 322-351 (NLFI…NIFA). A helical membrane pass occupies residues 401–421 (LVTFFTPYIILPIMFQVCSFY). A topological domain (lumenal) is located at residue asparagine 422. The chain crosses the membrane as a helical span at residues 423 to 443 (GFVIPKLFFSVVLFAGSIYIL). The Cytoplasmic segment spans residues 444–463 (QKLVIPTYLAEEKAIPKSPL). A helical membrane pass occupies residues 464–484 (LAGIFSGTAFWCIVTWAFNII). Residues 485 to 494 (PTLLFKKFIS) lie on the Lumenal side of the membrane. The helical transmembrane segment at 495–515 (NLVLSAFIYLFVWSFFKAMFI) threads the bilayer. Topologically, residues 516–589 (NPGYVPVPSD…YNDIGVRNHK (74 aa)) are cytoplasmic. A DHHC domain is found at 546-596 (NFCVNTFVRKPLRSKYSRFNKKLIARFDHYCPWVYNDIGVRNHKLFVVFVY). Cysteine 576 serves as the catalytic S-palmitoyl cysteine intermediate. Residues 590 to 610 (LFVVFVYSLNLAVLLFTHLSI) form a helical membrane-spanning segment. Residues 611–650 (KLFKNTEKMSGYDSDDESQKCWLLSDELCVGYKSHHFQFN) lie on the Lumenal side of the membrane. The chain crosses the membrane as a helical span at residues 651-671 (LMLWCLIQYIWIAFLCLVQTF). The Cytoplasmic segment spans residues 672 to 821 (QILKGLTTWE…YPPKLADVDA (150 aa)).

It belongs to the DHHC palmitoyltransferase family. AKR/ZDHHC17 subfamily.

It localises to the early endosome membrane. The protein localises to the golgi apparatus membrane. It catalyses the reaction L-cysteinyl-[protein] + hexadecanoyl-CoA = S-hexadecanoyl-L-cysteinyl-[protein] + CoA. Its function is as follows. Palmitoyltransferase specific for casein kinase 1. In Debaryomyces hansenii (strain ATCC 36239 / CBS 767 / BCRC 21394 / JCM 1990 / NBRC 0083 / IGC 2968) (Yeast), this protein is Palmitoyltransferase AKR1 (AKR1).